Here is a 439-residue protein sequence, read N- to C-terminus: Serine hydroxymethyltransferase (439 aa).

The interval 1 to 20 is disordered; sequence MNAPHRDETTASHRDDGFFT. (6S)-5,6,7,8-tetrahydrofolate contacts are provided by residues Leu136 and 140–142; that span reads GHL. Lys245 carries the post-translational modification N6-(pyridoxal phosphate)lysine.

The protein belongs to the SHMT family. As to quaternary structure, homodimer. It depends on pyridoxal 5'-phosphate as a cofactor.

The protein resides in the cytoplasm. The catalysed reaction is (6R)-5,10-methylene-5,6,7,8-tetrahydrofolate + glycine + H2O = (6S)-5,6,7,8-tetrahydrofolate + L-serine. It functions in the pathway one-carbon metabolism; tetrahydrofolate interconversion. Its pathway is amino-acid biosynthesis; glycine biosynthesis; glycine from L-serine: step 1/1. Its function is as follows. Catalyzes the reversible interconversion of serine and glycine with tetrahydrofolate (THF) serving as the one-carbon carrier. This reaction serves as the major source of one-carbon groups required for the biosynthesis of purines, thymidylate, methionine, and other important biomolecules. Also exhibits THF-independent aldolase activity toward beta-hydroxyamino acids, producing glycine and aldehydes, via a retro-aldol mechanism. In Jannaschia sp. (strain CCS1), this protein is Serine hydroxymethyltransferase.